The following is a 265-amino-acid chain: Type-1Ba cytolytic delta-endotoxin (265 aa).

It belongs to the cyt1/cyt2 endotoxin family. Active after proteolytic processing.

Its function is as follows. Kills the larvae of dipteran insects by making pores in the epithelial cell membrane of the insect midgut. In Bacillus thuringiensis subsp. neoleoensis, this protein is Type-1Ba cytolytic delta-endotoxin (cyt1Ba1).